The primary structure comprises 67 residues: Stomoxyn (67 aa).

Residues Met1–Ala24 form the signal peptide. The residue at position 66 (Thr66) is a Threonine amide.

Constitutively expressed in the adult anterior midgut; proventriculus, thoracic and reservoir regions.

It is found in the secreted. Has antimicrobial activity against most Gram-positive and Gram-negative bacteria, filamentous fungi and yeasts tested. Has trypanolytic effect on T.b.rhodesiense and limited hemolytic activity against bovine red blood cells. Its function is as follows. May play an important role in protecting the stored blood in the anterior midgut from microorganisms prior to digestion. Adopts an amphipathic alpha-helical structure only in the presence of an organic solvent that mimics a phospholipid membrane. This is Stomoxyn from Stomoxys calcitrans (Stable fly).